An 86-amino-acid polypeptide reads, in one-letter code: Large ribosomal subunit protein bL31 (86 aa).

The tract at residues 65–86 is disordered; it reads YGMGSANSATSKEQKEEKDSNK. Basic and acidic residues predominate over residues 76 to 86; the sequence is KEQKEEKDSNK.

It belongs to the bacterial ribosomal protein bL31 family. Type A subfamily. In terms of assembly, part of the 50S ribosomal subunit.

In terms of biological role, binds the 23S rRNA. The chain is Large ribosomal subunit protein bL31 from Prochlorococcus marinus (strain MIT 9312).